A 207-amino-acid chain; its full sequence is C-type lectin domain family 2 member D11 (207 aa).

Residues 1-44 (MSAKKASQPMLNTTGSLQEGEMGKMFHGKCLRIVSPESPAKLYC) lie on the Cytoplasmic side of the membrane. Phosphoserine is present on residues Ser7 and Ser16. A helical; Signal-anchor for type II membrane protein transmembrane segment spans residues 45-65 (CYGVIMVLSVAVVALSVALSV). The Extracellular portion of the chain corresponds to 66-207 (KMTPQISTIN…LQCKTPFSPM (142 aa)). In terms of domain architecture, C-type lectin spans 87-198 (VGNKCFYFSE…SCSKLNSYSL (112 aa)). The N-linked (GlcNAc...) asparagine glycan is linked to Asn100.

The protein localises to the cell membrane. Its function is as follows. Receptor for KLRB1B that protects target cells against natural killer cell-mediated lysis. The chain is C-type lectin domain family 2 member D11 (Clec2d11) from Rattus norvegicus (Rat).